A 167-amino-acid polypeptide reads, in one-letter code: Nascent polypeptide-associated complex subunit beta (167 aa).

Disordered stretches follow at residues 1–48 (MDQA…GADD) and 133–167 (QNMQ…SKVE). Residues 25–42 (NRNRGKGTPRRKVKKVHK) are compositionally biased toward basic residues. The NAC-A/B domain occupies 45–110 (GADDKKLQAT…GEEKELTELV (66 aa)). The span at 148–161 (DEEDDIPDLVEGQD) shows a compositional bias: acidic residues.

Belongs to the NAC-beta family. Part of the nascent polypeptide-associated complex (NAC), consisting of egd2 and egd1. NAC associates with ribosomes via egd1.

Its subcellular location is the cytoplasm. The protein resides in the nucleus. Component of the nascent polypeptide-associated complex (NAC), a dynamic component of the ribosomal exit tunnel, protecting the emerging polypeptides from interaction with other cytoplasmic proteins to ensure appropriate nascent protein targeting. The NAC complex also promotes mitochondrial protein import by enhancing productive ribosome interactions with the outer mitochondrial membrane and blocks the inappropriate interaction of ribosomes translating non-secretory nascent polypeptides with translocation sites in the membrane of the endoplasmic reticulum. EGD1 may act as a transcription factor that exert a negative effect on the expression of several genes that are transcribed by RNA polymerase II. This is Nascent polypeptide-associated complex subunit beta (egd1) from Aspergillus terreus (strain NIH 2624 / FGSC A1156).